Here is a 228-residue protein sequence, read N- to C-terminus: Probable 26S proteasome regulatory subunit p28 (228 aa).

ANK repeat units lie at residues 1–30 (MSNYPLHQACMENEFFKVQELLHSKPSLLL), 35–64 (DGRIPLHWSVSFQAHEITSFLLSKMENVNL), 71–100 (SGWTPFHIACSVGNLEVVKSLYDRPLKPDL), 106–135 (QGVTCLHLAVGKKWFEVSQFLIENGASVRI), 139–168 (FNQIPLHRAASVGSLKLIELLCGLGKSAVN), and 173–203 (QGWTPLFHALAEGHGDAAVLLVEKYGAEYDL).

As to quaternary structure, interacts with RPT3.

Functionally, acts as a chaperone during the assembly of the 26S proteasome, specifically of the 19S regulatory complex (RC) and appears to have an overlapping role with RPN14. This Saccharomyces cerevisiae (strain ATCC 204508 / S288c) (Baker's yeast) protein is Probable 26S proteasome regulatory subunit p28 (NAS6).